Here is a 445-residue protein sequence, read N- to C-terminus: Putative H/ACA ribonucleoprotein complex subunit 4 (445 aa).

The segment at 1-32 (MGKKDKRSKLEGDELAEAQQKGSFQLPSSNET) is disordered. Polar residues predominate over residues 20–32 (QKGSFQLPSSNET). Asp113 serves as the catalytic Nucleophile. The PUA domain occupies 284-359 (HKRVVVKDSC…IVAKSKRVIM (76 aa)). Positions 407-445 (TDKVKKEQEDKEDEEEEEAPKKKSKKAAKKEVSSSSDSE) are disordered.

This sequence belongs to the pseudouridine synthase TruB family. As to quaternary structure, component of the small nucleolar ribonucleoprotein particle containing H/ACA-type snoRNAs (H/ACA snoRNPs).

The protein localises to the nucleus. It localises to the nucleolus. The enzyme catalyses a uridine in RNA = a pseudouridine in RNA. Functionally, plays a central role in ribosomal RNA processing. Probable catalytic subunit of H/ACA small nucleolar ribonucleoprotein (H/ACA snoRNP) complex, which catalyzes pseudouridylation of rRNA. This involves the isomerization of uridine such that the ribose is subsequently attached to C5, instead of the normal N1. Pseudouridine ('psi') residues may serve to stabilize the conformation of rRNAs. The polypeptide is Putative H/ACA ribonucleoprotein complex subunit 4 (Caenorhabditis briggsae).